The sequence spans 199 residues: Nucleoside triphosphate pyrophosphatase (199 aa).

The active-site Proton acceptor is the Asp-76.

The protein belongs to the Maf family. A divalent metal cation serves as cofactor.

It localises to the cytoplasm. The enzyme catalyses a ribonucleoside 5'-triphosphate + H2O = a ribonucleoside 5'-phosphate + diphosphate + H(+). It catalyses the reaction a 2'-deoxyribonucleoside 5'-triphosphate + H2O = a 2'-deoxyribonucleoside 5'-phosphate + diphosphate + H(+). Functionally, nucleoside triphosphate pyrophosphatase. May have a dual role in cell division arrest and in preventing the incorporation of modified nucleotides into cellular nucleic acids. This Caulobacter vibrioides (strain ATCC 19089 / CIP 103742 / CB 15) (Caulobacter crescentus) protein is Nucleoside triphosphate pyrophosphatase.